The sequence spans 632 residues: Nucleoside triphosphatase I (632 aa).

The Helicase ATP-binding domain occupies 42–204; sequence FLGLDKMHSL…IMLVNLLRPK (163 aa). Position 55–62 (55–62) interacts with ATP; sequence HETGVGKT. A DEXH box motif is present at residues 141-144; the sequence is DECH. In terms of domain architecture, Helicase C-terminal spans 367 to 532; sequence KFTDVCLRIL…EFTQLFKVFK (166 aa). The binding to the cap-specific mRNA (nucleoside-2'-O-)-methyltransferase stretch occupies residues 457 to 524; sequence DIFILDMTWN…DIIRNKSKEF (68 aa).

The protein belongs to the helicase family. NPH I subfamily. As to quaternary structure, monomer. Interacts (via C-terminus) with RAP94 (via N-terminus). Interacts with the cap-specific mRNA (nucleoside-2'-O-)-methyltransferase.

It localises to the virion. It catalyses the reaction a ribonucleoside 5'-triphosphate + H2O = a ribonucleoside 5'-diphosphate + phosphate + H(+). Its function is as follows. DNA-dependent ATPase required for providing the needed energy to achieve the termination of early transcripts. Acts in concert with the RAP94 subunit of the virion RNA polymerase and the capping enzyme/VTF to catalyze release of UUUUUNU-containing nascent RNA from the elongation complex. NPH-I must bind ssDNA in order to exhibit ATPase activity. This chain is Nucleoside triphosphatase I (NPH1), found in Rabbit fibroma virus (strain Kasza) (RFV).